The sequence spans 65 residues: Large ribosomal subunit protein bL35 (65 aa).

It belongs to the bacterial ribosomal protein bL35 family.

This chain is Large ribosomal subunit protein bL35, found in Agathobacter rectalis (strain ATCC 33656 / DSM 3377 / JCM 17463 / KCTC 5835 / VPI 0990) (Eubacterium rectale).